The chain runs to 630 residues: Subtilisin-like protease 1 (630 aa).

An N-terminal signal peptide occupies residues 1-25 (MVLTRRAALLLCPWVIQLVIKRTLA). Positions 26 to 202 (GDILPNEGKK…IESDKLVGAD (177 aa)) are cleaved as a propeptide — inhibition peptide. The interval 72–125 (NAYNPDRDAPKEELQKLQDQQETPSKQPNNLRNSPQKRAEKKESPGKNKKSLRL) is disordered. Positions 76-87 (PDRDAPKEELQK) are enriched in basic and acidic residues. The span at 94–107 (TPSKQPNNLRNSPQ) shows a compositional bias: polar residues. The span at 108-117 (KRAEKKESPG) shows a compositional bias: basic and acidic residues. Residues E129, N130, T133, P135, and G190 each coordinate Ca(2+). A disordered region spans residues 230–254 (LEVPSGESPPSHAASSGSPFDDDDD). Low complexity predominate over residues 233–248 (PSGESPPSHAASSGSP). D281 serves as a coordination point for Ca(2+). The Peptidase S8 domain occupies 287–604 (QWGLDLARLD…GGYVDILRAV (318 aa)). 3 disulfides stabilise this stretch: C313–C423, C402–C419, and C465–C478. D316 functions as the Charge relay system in the catalytic mechanism. D325, E336, R340, V343, D344, D345, D346, N348, V350, D352, and D353 together coordinate Ca(2+). H372 acts as the Charge relay system in catalysis. Ca(2+) is bound by residues V383, N386, I388, and I390. A glycan (N-linked (GlcNAc...) asparagine) is linked at N546. S549 acts as the Charge relay system in catalysis.

This sequence belongs to the peptidase S8 family. Heterodimer between p54 form and prodomain p31; the interaction inhibits p54 catalytic activity. Heterodimer p31-p54 is monomeric at basic pH and dimeric at acidic pH; dimerization is driven by the N-terminal prodomain (p31). It depends on Ca(2+) as a cofactor. The prodomain (p31) is cleaved, probably by autocatalysis, and remains non-covalently associated with the p54 form as an inhibitor. p54 is further cleaved into the p45/p47 forms. Post-translationally, the relevance of the N-glycosylation is not clear. In an insect expression system, SUB1 glycosylation appears to affect its processing into the active mature form suggesting that SUB1 may not be N-glycosylated in parasites.

The protein localises to the secreted. Its subcellular location is the parasitophorous vacuole lumen. The enzyme catalyses Hydrolysis of proteins with broad specificity for peptide bonds, and a preference for a large uncharged residue in P1. Hydrolyzes peptide amides.. Inhibited by peptidic alpha-ketoamide inhibitors. Inhibited by the alpha-ketoamide nonapeptide JMV5126 (isocaproyl-KITAQ(CO)DDEE-NH2). Inhibited by the alpha-ketoamide peptide MAM-117. Functionally, serine protease which plays an essential role in merozoite invasion of and egress from host erythrocytes by processing and activating various merozoite surface and parasitophorous vacuole proteins. This chain is Subtilisin-like protease 1, found in Plasmodium vivax.